We begin with the raw amino-acid sequence, 90 residues long: MANIKSKIKSITKMQKARARNNAIKSRVKTAIKKAKIAISTDASNKSDLIAKAHSEISKAKSKGVFHKNKANRKISRLNLFANTYTTPAQ.

The protein belongs to the bacterial ribosomal protein bS20 family.

Functionally, binds directly to 16S ribosomal RNA. This chain is Small ribosomal subunit protein bS20, found in Mesomycoplasma hyopneumoniae (strain 232) (Mycoplasma hyopneumoniae).